We begin with the raw amino-acid sequence, 356 residues long: Holliday junction branch migration complex subunit RuvB (356 aa).

Residues 1–14 (MAIVSSITNHSSLP) show a composition bias toward polar residues. Positions 1–20 (MAIVSSITNHSSLPNDKGEE) are disordered. The interval 13–201 (LPNDKGEERL…FGITQRLDFY (189 aa)) is large ATPase domain (RuvB-L). ATP is bound by residues Leu-40, Arg-41, Gly-82, Lys-85, Thr-86, Thr-87, Arg-191, Tyr-201, and Arg-238. Thr-86 is a binding site for Mg(2+). The small ATPAse domain (RuvB-S) stretch occupies residues 202-273 (NYLDLENIIK…VVNDALDLHR (72 aa)). A head domain (RuvB-H) region spans residues 276–356 (QRGLDATDRS…LLTSPNNIDK (81 aa)). Residues Arg-331 and Arg-336 each coordinate DNA.

The protein belongs to the RuvB family. As to quaternary structure, homohexamer. Forms an RuvA(8)-RuvB(12)-Holliday junction (HJ) complex. HJ DNA is sandwiched between 2 RuvA tetramers; dsDNA enters through RuvA and exits via RuvB. An RuvB hexamer assembles on each DNA strand where it exits the tetramer. Each RuvB hexamer is contacted by two RuvA subunits (via domain III) on 2 adjacent RuvB subunits; this complex drives branch migration. In the full resolvosome a probable DNA-RuvA(4)-RuvB(12)-RuvC(2) complex forms which resolves the HJ.

It localises to the cytoplasm. The catalysed reaction is ATP + H2O = ADP + phosphate + H(+). Its function is as follows. The RuvA-RuvB-RuvC complex processes Holliday junction (HJ) DNA during genetic recombination and DNA repair, while the RuvA-RuvB complex plays an important role in the rescue of blocked DNA replication forks via replication fork reversal (RFR). RuvA specifically binds to HJ cruciform DNA, conferring on it an open structure. The RuvB hexamer acts as an ATP-dependent pump, pulling dsDNA into and through the RuvAB complex. RuvB forms 2 homohexamers on either side of HJ DNA bound by 1 or 2 RuvA tetramers; 4 subunits per hexamer contact DNA at a time. Coordinated motions by a converter formed by DNA-disengaged RuvB subunits stimulates ATP hydrolysis and nucleotide exchange. Immobilization of the converter enables RuvB to convert the ATP-contained energy into a lever motion, pulling 2 nucleotides of DNA out of the RuvA tetramer per ATP hydrolyzed, thus driving DNA branch migration. The RuvB motors rotate together with the DNA substrate, which together with the progressing nucleotide cycle form the mechanistic basis for DNA recombination by continuous HJ branch migration. Branch migration allows RuvC to scan DNA until it finds its consensus sequence, where it cleaves and resolves cruciform DNA. The protein is Holliday junction branch migration complex subunit RuvB of Prochlorococcus marinus (strain NATL2A).